A 778-amino-acid chain; its full sequence is Hyaluronate lyase (778 aa).

The segment at residues 1 to 33 (MSWNRRSFLGALGVTCLAGAGMVPIVRPRTAAA) is a signal peptide (tat-type signal). Residues N200, H250, and Y259 contribute to the active site.

It belongs to the polysaccharide lyase 8 family. In terms of processing, predicted to be exported by the Tat system. The position of the signal peptide cleavage has not been experimentally proven.

It catalyses the reaction [hyaluronan](n) = n 3-(4-deoxy-beta-D-gluc-4-enuronosyl)-N-acetyl-D-glucosamine + H2O. With respect to regulation, is salt-dependent and is active over a wide range of NaCl concentrations. Activity is slightly promoted by Ni(2+), and inhibited by most of the tested metal ions, including Li(+), K(+), Ba(2+), Mg(2+), Zn(2+), Ca(2+), Mn(2+) and Al(3+). Its function is as follows. Degrades hyaluronic acid into unsaturated disaccharides as the end products. Exhibits very low activity against various types of chondroitin sulfate variants. This is Hyaluronate lyase from Thermasporomyces composti.